The chain runs to 492 residues: Vacuolar fusion protein CCZ1 homolog (492 aa).

The segment at 255-275 (SVHAGPTSSSSNGTASVERPL) is disordered. Residues 260-269 (PTSSSSNGTA) are compositionally biased toward polar residues.

The protein belongs to the CCZ1 family. Interacts with MON1.

The protein localises to the endosome. Its subcellular location is the prevacuolar compartment. Functionally, plays an important role in membrane trafficking through the secretory apparatus. In complex with MON1, acts as a guanine exchange factor (GEF) for Rab7 protein family. Promotes the exchange of GDP to GTP, converting it from an inactive GDP-bound form into an active GTP-bound form. The active form is involved in protein trafficking from prevacuolar compartments (PVCs) to vacuoles. May serve as a linker between Rab5 and Rab7 protein families in PVCs and mediate PVC maturation. The sequence is that of Vacuolar fusion protein CCZ1 homolog from Oryza sativa subsp. japonica (Rice).